Reading from the N-terminus, the 274-residue chain is Nitrogenase iron protein (274 aa).

Residue 8 to 15 coordinates ATP; that stretch reads GKGGIGKS. C94 contacts [4Fe-4S] cluster. R97 carries the ADP-ribosylarginine; by dinitrogenase reductase ADP-ribosyltransferase modification. Position 131 (C131) interacts with [4Fe-4S] cluster.

This sequence belongs to the NifH/BchL/ChlL family. As to quaternary structure, homodimer. It depends on [4Fe-4S] cluster as a cofactor. In terms of processing, the reversible ADP-ribosylation of Arg-97 inactivates the nitrogenase reductase and regulates nitrogenase activity.

The catalysed reaction is N2 + 8 reduced [2Fe-2S]-[ferredoxin] + 16 ATP + 16 H2O = H2 + 8 oxidized [2Fe-2S]-[ferredoxin] + 2 NH4(+) + 16 ADP + 16 phosphate + 6 H(+). In terms of biological role, the key enzymatic reactions in nitrogen fixation are catalyzed by the nitrogenase complex, which has 2 components: the iron protein and the molybdenum-iron protein. This is Nitrogenase iron protein from Chlorobium phaeobacteroides (strain BS1).